A 264-amino-acid polypeptide reads, in one-letter code: Thymidylate synthase (264 aa).

Arg-21 is a binding site for dUMP. His-51 is a (6R)-5,10-methylene-5,6,7,8-tetrahydrofolate binding site. 126 to 127 (RR) is a dUMP binding site. Cys-146 serves as the catalytic Nucleophile. DUMP is bound by residues 166–169 (RSAD), Asn-177, and 207–209 (HLY). Position 169 (Asp-169) interacts with (6R)-5,10-methylene-5,6,7,8-tetrahydrofolate. Ala-263 is a binding site for (6R)-5,10-methylene-5,6,7,8-tetrahydrofolate.

Belongs to the thymidylate synthase family. Bacterial-type ThyA subfamily. As to quaternary structure, homodimer.

Its subcellular location is the cytoplasm. It carries out the reaction dUMP + (6R)-5,10-methylene-5,6,7,8-tetrahydrofolate = 7,8-dihydrofolate + dTMP. Its pathway is pyrimidine metabolism; dTTP biosynthesis. In terms of biological role, catalyzes the reductive methylation of 2'-deoxyuridine-5'-monophosphate (dUMP) to 2'-deoxythymidine-5'-monophosphate (dTMP) while utilizing 5,10-methylenetetrahydrofolate (mTHF) as the methyl donor and reductant in the reaction, yielding dihydrofolate (DHF) as a by-product. This enzymatic reaction provides an intracellular de novo source of dTMP, an essential precursor for DNA biosynthesis. The sequence is that of Thymidylate synthase from Methylobacterium nodulans (strain LMG 21967 / CNCM I-2342 / ORS 2060).